A 350-amino-acid chain; its full sequence is MEASAPDRARRGWRRARAAASPLSRAAVVLLLSALVLRAPPSVGYLDRLPRSFHLTQESAKIVGSPNFPVKVYVMLHQKSPHVLCVTQRLRNFELVDPSFQWHGPKGKIVSENSTAQVTSTGSLVFQNFEESMSGVYTCFLEYKPTVEEVVKNLQLKYIIYAYREPRYYYQFTARYHAAPCNSIYNISFEKKLLQILSKLVLDLSCEVSLLKSECHRVKMQRAGLQNELFFTFSVSSLDTEKGPKPCAGHSCESSKRLSKAKNLIERFFNQQVEVLGRRAEPLPEIYYIEGTLQMVWINRCFPGYGMNILKHPKCPECCVICSPGTYNSRDGIHCLQCNSSLVFGAKACL.

The signal sequence occupies residues 1–38 (MEASAPDRARRGWRRARAAASPLSRAAVVLLLSALVLR). N-linked (GlcNAc...) asparagine glycans are attached at residues asparagine 113, asparagine 186, and asparagine 339.

This sequence belongs to the zona pellucida-binding protein Sp38 family. Post-translationally, N-glycosylated. In terms of tissue distribution, expressed in testis. Detected in sperm cells.

It localises to the cytoplasmic vesicle. The protein resides in the secretory vesicle. Its subcellular location is the acrosome. The protein localises to the secreted. It is found in the acrosome membrane. In terms of biological role, plays a role in acrosome compaction and sperm morphogenesis. Is implicated in sperm-oocyte interaction during fertilization. This is Zona pellucida-binding protein 1 (ZPBP) from Sus scrofa (Pig).